The following is a 314-amino-acid chain: Homoserine O-acetyltransferase (314 aa).

Catalysis depends on Cys142, which acts as the Acyl-thioester intermediate. Substrate contacts are provided by Lys163 and Ser192. The active-site Proton acceptor is His235. Residue Glu237 is part of the active site. Arg249 is a substrate binding site.

This sequence belongs to the MetA family.

It localises to the cytoplasm. The catalysed reaction is L-homoserine + acetyl-CoA = O-acetyl-L-homoserine + CoA. It participates in amino-acid biosynthesis; L-methionine biosynthesis via de novo pathway; O-acetyl-L-homoserine from L-homoserine: step 1/1. Transfers an acetyl group from acetyl-CoA to L-homoserine, forming acetyl-L-homoserine. This is Homoserine O-acetyltransferase from Streptococcus thermophilus (strain ATCC BAA-250 / LMG 18311).